A 350-amino-acid chain; its full sequence is Succinylglutamate desuccinylase (350 aa).

Residues His-71, Glu-74, and His-169 each coordinate Zn(2+). Residue Glu-233 is part of the active site.

It belongs to the AspA/AstE family. Succinylglutamate desuccinylase subfamily. The cofactor is Zn(2+).

The enzyme catalyses N-succinyl-L-glutamate + H2O = L-glutamate + succinate. It participates in amino-acid degradation; L-arginine degradation via AST pathway; L-glutamate and succinate from L-arginine: step 5/5. Transforms N(2)-succinylglutamate into succinate and glutamate. The chain is Succinylglutamate desuccinylase from Pseudoalteromonas atlantica (strain T6c / ATCC BAA-1087).